A 219-amino-acid polypeptide reads, in one-letter code: Flagellar transcriptional regulator FlhC (219 aa).

Residues C137, C140, C157, and C160 each contribute to the Zn(2+) site.

The protein belongs to the FlhC family. In terms of assembly, heterohexamer composed of two FlhC and four FlhD subunits. Each FlhC binds a FlhD dimer, forming a heterotrimer, and a hexamer assembles by dimerization of two heterotrimers. Zn(2+) is required as a cofactor.

The protein resides in the cytoplasm. Its function is as follows. Functions in complex with FlhD as a master transcriptional regulator that regulates transcription of several flagellar and non-flagellar operons by binding to their promoter region. Activates expression of class 2 flagellar genes, including fliA, which is a flagellum-specific sigma factor that turns on the class 3 genes. Also regulates genes whose products function in a variety of physiological pathways. The protein is Flagellar transcriptional regulator FlhC of Paraburkholderia phymatum (strain DSM 17167 / CIP 108236 / LMG 21445 / STM815) (Burkholderia phymatum).